A 504-amino-acid polypeptide reads, in one-letter code: Light-independent protochlorophyllide reductase subunit B (504 aa).

A [4Fe-4S] cluster-binding site is contributed by aspartate 36. Aspartate 279 acts as the Proton donor in catalysis. Glycine 414–leucine 415 contributes to the substrate binding site.

The protein belongs to the ChlB/BchB/BchZ family. In terms of assembly, protochlorophyllide reductase is composed of three subunits; BchL, BchN and BchB. Forms a heterotetramer of two BchB and two BchN subunits. [4Fe-4S] cluster is required as a cofactor.

It carries out the reaction chlorophyllide a + oxidized 2[4Fe-4S]-[ferredoxin] + 2 ADP + 2 phosphate = protochlorophyllide a + reduced 2[4Fe-4S]-[ferredoxin] + 2 ATP + 2 H2O. The protein operates within porphyrin-containing compound metabolism; bacteriochlorophyll biosynthesis (light-independent). Component of the dark-operative protochlorophyllide reductase (DPOR) that uses Mg-ATP and reduced ferredoxin to reduce ring D of protochlorophyllide (Pchlide) to form chlorophyllide a (Chlide). This reaction is light-independent. The NB-protein (BchN-BchB) is the catalytic component of the complex. This is Light-independent protochlorophyllide reductase subunit B from Acidiphilium rubrum.